Reading from the N-terminus, the 41-residue chain is SPbeta prophage-derived uncharacterized protein YosF (41 aa).

The chain is SPbeta prophage-derived uncharacterized protein YosF (yosF) from Bacillus subtilis (strain 168).